Consider the following 283-residue polypeptide: Non-selective voltage-gated ion channel VDAC3 (283 aa).

At cysteine 2 the chain carries N-acetylcysteine. Threonine 4 carries the phosphothreonine modification. Lysine 12, lysine 15, and lysine 20 each carry N6-acetyllysine. 2 beta stranded membrane passes run 26 to 35 (MVKIDLKTKS) and 39 to 47 (VEFSTSGHA). Glycyl lysine isopeptide (Lys-Gly) (interchain with G-Cter in ubiquitin) cross-links involve residues lysine 53 and lysine 61. The next 3 membrane-spanning stretches (beta stranded) occupy residues 54-64 (ASGNLETKYKV), 69-76 (LTFTQKWN), and 80-89 (TLGTEISWEN). An N6-acetyllysine modification is found at lysine 90. The chain crosses the membrane as a beta stranded span at residues 95-104 (LKLTLDTIFV). Residues lysine 109 and lysine 110 each participate in a glycyl lysine isopeptide (Lys-Gly) (interchain with G-Cter in ubiquitin) cross-link. The next 10 membrane-spanning stretches (beta stranded) occupy residues 111–120 (SGKLKASYKR), 123–130 (FSVGSNVD), 137–145 (TIYGWAVLA), 150–158 (LAGYQMSFD), 163–175 (KLSQ…GYKA), 178–185 (FQLHTHVN), 189–198 (EFGGSIYQKV), 202–211 (IETSINLAWT), 218–227 (RFGIAAKYML), and 231–238 (TSLSAKVN). Lysine 163 participates in a covalent cross-link: Glycyl lysine isopeptide (Lys-Gly) (interchain with G-Cter in ubiquitin). The residue at position 241 (serine 241) is a Phosphoserine. Residues 242-244 (LIG) and 260-264 (SALID) each bind NAD(+). The next 2 beta stranded transmembrane spans lie at 242 to 251 (LIGLGYTQTL) and 254 to 263 (GVKLTLSALI). At lysine 266 the chain carries N6-acetyllysine; alternate. A Glycyl lysine isopeptide (Lys-Gly) (interchain with G-Cter in ubiquitin); alternate cross-link involves residue lysine 266. Residues 273–282 (HKVGLGFELE) form a beta stranded membrane-spanning segment. Residue lysine 274 forms a Glycyl lysine isopeptide (Lys-Gly) (interchain with G-Cter in ubiquitin) linkage.

It belongs to the eukaryotic mitochondrial porin family. As to quaternary structure, interacts with ARMC12 in a TBC1D21-dependent manner. Interacts with MISFA. In terms of processing, ubiquitinated by PRKN during mitophagy, leading to its degradation and enhancement of mitophagy. Deubiquitinated by USP30. Expressed in erythrocytes (at protein level). Widely expressed. Highest in testis.

The protein resides in the mitochondrion outer membrane. It is found in the membrane. It carries out the reaction chloride(in) = chloride(out). The catalysed reaction is K(+)(in) = K(+)(out). Non-selective voltage-gated ion channel that mediates the transport of anions and cations through the mitochondrion outer membrane and plasma membrane. Forms a high-conducting channel with a stable open state and a voltage-induced closure with a mild preference for anions over cations. Involved in male fertility and sperm mitochondrial sheath formation. This is Non-selective voltage-gated ion channel VDAC3 from Homo sapiens (Human).